Consider the following 464-residue polypeptide: UDP-glucose:undecaprenyl-phosphate glucose-1-phosphate transferase (464 aa).

At 1-15 (MTNLKKRERAKTNAS) the chain is on the cytoplasmic side. Residues 16 to 36 (LISMVQRFSDITIMFAGLWLV) traverse the membrane as a helical segment. Topologically, residues 37–38 (CE) are periplasmic. Residues 39–59 (VSGLSFLYMHLLVALITLVVF) traverse the membrane as a helical segment. The Cytoplasmic portion of the chain corresponds to 60–80 (QMLGGITDFYRSWRGVRAATE). Residues 81-101 (FALLLQNWTLSVIFSAGLVAF) traverse the membrane as a helical segment. Over 102–104 (NND) the chain is Periplasmic. A helical transmembrane segment spans residues 105–125 (FDTQLKIWLAWYALTSIGLVV). Residues 126-278 (CRSCIRIGAG…VNRLLKRAED (153 aa)) lie on the Cytoplasmic side of the membrane. The helical transmembrane segment at 279–299 (IVLATLILLLISPVLCCIALA) threads the bilayer. The Periplasmic segment spans residues 300–464 (VKLSSPGPVI…FKGFVNKAAY (165 aa)).

Belongs to the bacterial sugar transferase family.

The protein resides in the cell inner membrane. It carries out the reaction di-trans,octa-cis-undecaprenyl phosphate + UDP-alpha-D-glucose = alpha-D-glucosyl di-trans,octa-cis-undecaprenyl diphosphate + UMP. Its pathway is exopolysaccharide biosynthesis; colanic acid biosynthesis. In terms of biological role, is the initiating enzyme for colanic acid (CA) synthesis. Catalyzes the transfer of the glucose-1-phosphate moiety from UDP-Glc onto the carrier lipid undecaprenyl phosphate (C55-P), forming a phosphoanhydride bond yielding to glucosyl-pyrophosphoryl-undecaprenol (Glc-PP-C55). Also possesses a weak galactose-1-P transferase activity. This Escherichia coli (strain K12) protein is UDP-glucose:undecaprenyl-phosphate glucose-1-phosphate transferase (wcaJ).